A 669-amino-acid chain; its full sequence is Galactocerebrosidase (669 aa).

The N-terminal stretch at 1–26 is a signal peptide; that stretch reads MTAAAGSAGHAAVPLLLCALLVPGGA. Thr93, Trp135, and Asn181 together coordinate substrate. Glu182 (proton donor/acceptor) is an active-site residue. Glu258 acts as the Nucleophile in catalysis. A disulfide bridge connects residues Cys271 and Cys378. The N-linked (GlcNAc...) asparagine glycan is linked to Asn363. Arg380 contacts substrate. Residues Asn387, Asn543, and Asn586 are each glycosylated (N-linked (GlcNAc...) asparagine).

This sequence belongs to the glycosyl hydrolase 59 family.

It is found in the lysosome. It catalyses the reaction a beta-D-galactosyl-(1&lt;-&gt;1')-N-acylsphing-4-enine + H2O = an N-acylsphing-4-enine + D-galactose. It carries out the reaction beta-D-galactosyl-(1&lt;-&gt;1)-sphing-4-enine + H2O = sphing-4-enine + D-galactose. The catalysed reaction is a D-galactosylceramide + H2O = an N-acyl-sphingoid base + D-galactose. In terms of biological role, hydrolyzes the galactose ester bonds of glycolipids such as galactosylceramide and galactosylsphingosine. Enzyme with very low activity responsible for the lysosomal catabolism of galactosylceramide, a major lipid in myelin, kidney and epithelial cells of small intestine and colon. The polypeptide is Galactocerebrosidase (Canis lupus familiaris (Dog)).